A 1849-amino-acid polypeptide reads, in one-letter code: NADH-ubiquinone oxidoreductase chain 5 (1849 aa).

The next 41 membrane-spanning stretches (helical) occupy residues 76–93 (YLLLYYCIYALELYTVCY), 98–120 (LILLYLIQLNYILLTNIVGYLQY), 190–212 (YWLCVVIWNNIGWWTYQLMIIGW), 222–244 (LVPTILAIINLILTYIDLIIYLY), 279–301 (HLLTVIIPNYCLAIYNSGLILSS), 316–338 (LALQYLVAPLYISCSLLIYILCY), 358–380 (LEIIYLDILVNSLISIIILILSV), 390–412 (VIILSQYINIISGYVAMPTTILI), 419–441 (IAVYIYYLVDYIATISTLIIWLL), 483–505 (LLDAIMNVVTSVILLITVSCLGV), 510–532 (LFIAVYPVYCIGVLLLNTLLQVV), 536–558 (ISYIIGTFMNAIILICDIYVYSI), 565–587 (LIMYVYFVAAIILEPIIDIIHTI), 621–640 (IWLIADLILAYIDLIRSTLV), 683–705 (WVRFLIYCAGNNINLLVLLYVQF), 718–740 (LTRIQLYATIPVIISSYIYQGIL), 745–767 (IISYYNTLLVATLEFIQIWLTIL), 797–819 (PTWVLFECLSTCVGLVELYLVTV), 868–890 (ILLLMSSGLQSTVLNTIFDLLSL), 905–927 (LTVQVCTIPAALYSTIIYPYIVL), 966–988 (LYSYNLYLLELYNIYYFWLSLLE), 1008–1030 (PDLLISLISYIIDICILSLELLL), 1073–1095 (LTVVFYILNLCGILNEISIQILF), 1105–1127 (LATIYCTVVLPYILIILEILSYL), 1172–1194 (TYLLYIVLEQLLLVIIDLYIYII), 1219–1241 (VYFLYFMIFIGYLLCGIFAFFYH), 1248–1270 (GIFYLSEMIIMGILIFSIVTLYY), 1296–1318 (IITFDILSILGVLLVATLTAIIL), 1330–1352 (FAYNVLATLVLFSASIICFIVSY), 1357–1379 (MIIFWEISGTLSLFLIDMYYARI), 1418–1440 (LFALLPYAQFNLSILGNLIFDFT), 1444–1466 (VIVFSIFSAAACKCAQFLLFVWL), 1478–1500 (ALIHSSTLVVMGIFMILRFAPIL), 1504–1526 (VYTLYIMSILGSLTVAYGAILAT), 1533–1555 (KAVAYSTISQIGYLFTGCAFLAF), 1559–1581 (LIYLILHAICKALLFVLVGYIVH), 1602–1624 (IAIYMFILCMVLAGAPYTVGFFA), 1639–1661 (VATFIICCWIISFACTPFYLYRI), 1719–1741 (LLHLLLLLIVLFCGEFLVFLVTG), 1773–1795 (VRNIQLLIIVLFALVTLYITAIN), and 1802–1824 (IIYLSVVLPILAIIFICLGHYFL).

The protein belongs to the complex I subunit 5 family.

The protein resides in the hydrogenosome membrane. The enzyme catalyses a ubiquinone + NADH + 5 H(+)(in) = a ubiquinol + NAD(+) + 4 H(+)(out). The sequence is that of NADH-ubiquinone oxidoreductase chain 5 (nad5) from Nyctotherus ovalis.